The following is a 92-amino-acid chain: Tachykinin-2 (92 aa).

The first 22 residues, methionine 1–alanine 22, serve as a signal peptide directing secretion. A propeptide spanning residues aspartate 23–valine 37 is cleaved from the precursor. Methionine 49 is subject to Methionine amide. Positions serine 52–cysteine 92 are excised as a propeptide. The disordered stretch occupies residues glutamine 61–cysteine 92.

The protein belongs to the tachykinin family. In terms of tissue distribution, expressed in the posterior salivary gland and more specifically in the mucus-secreting gland cells.

The protein localises to the secreted. Tachykinins are active peptides which excite neurons, evoke behavioral responses, are potent vasodilators and secretagogues, and contract (directly or indirectly) many smooth muscles. This is Tachykinin-2 from Octopus vulgaris (Common octopus).